The sequence spans 176 residues: Ribosome rescue factor SmrB (176 aa).

The Smr domain occupies 98 to 173; that stretch reads LDLHGLTQMQ…GTAAILLLVE (76 aa).

It belongs to the SmrB family. As to quaternary structure, associates with collided ribosomes, but not with correctly translating polysomes.

Functionally, acts as a ribosome collision sensor. Detects stalled/collided disomes (pairs of ribosomes where the leading ribosome is stalled and a second ribosome has collided with it) and endonucleolytically cleaves mRNA at the 5' boundary of the stalled ribosome. Stalled/collided disomes form a new interface (primarily via the 30S subunits) that binds SmrB. Cleaved mRNA becomes available for tmRNA ligation, leading to ribosomal subunit dissociation and rescue of stalled ribosomes. The polypeptide is Ribosome rescue factor SmrB (Serratia proteamaculans (strain 568)).